A 497-amino-acid polypeptide reads, in one-letter code: WASH complex subunit homolog 1 (497 aa).

Residues 306–497 (EASEPTEAEA…PPNFDDEEWD (192 aa)) form a disordered region. A compositionally biased stretch (pro residues) spans 323-339 (LPPPPPPMKLDPSPQPA). The segment covering 341–350 (TPVEITEIPP) has biased composition (low complexity). A compositionally biased stretch (pro residues) spans 351 to 372 (IISPPAPPPPPPPPPPPPPPQT). Residues 390 to 412 (GRSDLMAAIRAAGGAGNAKLSRI) enclose the WH2 domain.

This sequence belongs to the WASH1 family. In terms of assembly, component of the WASH core complex. Component of the DHIC (ddl-1-containing hsf-1 inhibitory) complex, which contains at least ddl-1, ddl-2, hsb-1 and hsf-1. Within the complex, interacts with ddl-1. Formation of the DHIC may be dependent upon the Insulin/IGF-1-like signaling (IIS) mediated pathway. Expressed in several neurons located throughout the body.

Acts as a component of the WASH core complex that functions as a nucleation-promoting factor (NPF) at the surface of endosomes, where it recruits and activates the Arp2/3 complex to induce actin polymerization, playing a key role in the fission of tubules that serve as transport intermediates during endosome sorting. Acts as a component of the DHIC (ddl-1-containing hsf-1 inhibitory complex) which modulates lifespan by sequestering the heat shock transcription factor hsf-1 to negatively regulate its binding to DNA and its transcriptional activity. The polypeptide is WASH complex subunit homolog 1 (Caenorhabditis elegans).